The following is a 235-amino-acid chain: MAEDEIVVEEEQSQPQEITPVPPSSSSSPSLVVEDDDEMKLKHLEFIQVAAVYFAACFSTLYELAKDNAGPLKLGVENIEDCVRTVLAPLYEKFHDVPFKLLLFVDRKVDDVFFDVETYVPSLVKQASSQALTVATEVQRTGVVDTTKSIARSVRDKYEPAAEYYAATLWRLLNQLPLFPEVAHLVIPTAFYWSEKYNDAVRYVGDRDYFGAEYLPMIPIEKISDILEQDQCRAD.

Residues 1-12 show a composition bias toward acidic residues; the sequence is MAEDEIVVEEEQ. Positions 1 to 32 are disordered; it reads MAEDEIVVEEEQSQPQEITPVPPSSSSSPSLV.

It belongs to the REF/SRPP family.

This Arabidopsis thaliana (Mouse-ear cress) protein is REF/SRPP-like protein At2g47780.